The primary structure comprises 464 residues: Gamma-aminobutyric acid receptor subunit alpha-5 (464 aa).

The first 25 residues, 1-25, serve as a signal peptide directing secretion; it reads MDNGMLSRFIMTKTLLVFCISMTLS. Over 26–260 the chain is Extracellular; it reads SHFGFSQMPT…FHLKRKIGYF (235 aa). N-linked (GlcNAc...) asparagine glycosylation is present at N45. Residue R101 coordinates 4-aminobutanoate. N145 carries N-linked (GlcNAc...) asparagine glycosylation. T164 serves as a coordination point for 4-aminobutanoate. C173 and C187 are joined by a disulfide. N-linked (GlcNAc...) asparagine glycosylation is found at N207 and N236. The next 3 helical transmembrane spans lie at 261–281, 287–308, and 319–340; these read VIQT…SFWL, PART…ISAR, and AMDW…EFAT. The Cytoplasmic segment spans residues 341 to 429; sequence VNYFTKRGWA…TYNSISKIDK (89 aa). K355 participates in a covalent cross-link: Glycyl lysine isopeptide (Lys-Gly) (interchain with G-Cter in ubiquitin). The interval 382 to 414 is disordered; the sequence is KLTHPPNIPKEQLPGGTGNAVGTASIRASEEKT. Residues 430–450 form a helical membrane-spanning segment; sequence MSRIVFPILFGTFNLVYWATY.

Belongs to the ligand-gated ion channel (TC 1.A.9) family. Gamma-aminobutyric acid receptor (TC 1.A.9.5) subfamily. GABRA5 sub-subfamily. As to quaternary structure, heteropentamer, formed by a combination of alpha (GABRA1-6), beta (GABRB1-3), gamma (GABRG1-3), delta (GABRD), epsilon (GABRE), rho (GABRR1-3), pi (GABRP) and theta (GABRQ) chains, each subunit exhibiting distinct physiological and pharmacological properties. Expressed in brain areas such as cerebral cortex, hippocampal formation and olfactory bulb granular layer.

It is found in the postsynaptic cell membrane. The protein resides in the cell membrane. The enzyme catalyses chloride(in) = chloride(out). Allosterically potentiated by alphaxalone. Allosterically inhibited by pregnenolone sulfate. Inhibited by zinc and lanthanum. Alpha subunit of the heteropentameric ligand-gated chloride channel gated by gamma-aminobutyric acid (GABA), a major inhibitory neurotransmitter in the brain. GABA-gated chloride channels, also named GABA(A) receptors (GABAAR), consist of five subunits arranged around a central pore and contain GABA active binding site(s) located at the alpha and beta subunit interface(s). When activated by GABA, GABAARs selectively allow the flow of chloride anions across the cell membrane down their electrochemical gradient. GABAARs containing alpha-5/GABRA5 subunits are mainly extrasynaptic and contribute to the tonic GABAergic inhibition in the hippocampus. Extrasynaptic alpha-5-containing GABAARs in CA1 pyramidal neurons play a role in learning and memory processes. The protein is Gamma-aminobutyric acid receptor subunit alpha-5 of Rattus norvegicus (Rat).